We begin with the raw amino-acid sequence, 367 residues long: Probable butyrate kinase (367 aa).

The protein belongs to the acetokinase family.

It is found in the cytoplasm. The enzyme catalyses butanoate + ATP = butanoyl phosphate + ADP. This Bacillus cereus (strain Q1) protein is Probable butyrate kinase.